A 500-amino-acid polypeptide reads, in one-letter code: Protein gar2 (500 aa).

Composition is skewed to basic and acidic residues over residues 1–41 and 59–68; these read MAKK…KEIA and KRASSPEPSK. The tract at residues 1-262 is disordered; sequence MAKKDKTSVK…TKPSQDSNET (262 aa). A compositionally biased stretch (basic residues) spans 69–78; sequence KSVKKQKKSK. Low complexity predominate over residues 90 to 120; the sequence is ESSSSESESSSSESESSSSESESSSSESSSS. A compositionally biased stretch (basic and acidic residues) spans 126–137; the sequence is VIVKTEEKKESS. Residues serine 143, serine 144, and serine 146 each carry the phosphoserine modification. Positions 152–163 are enriched in basic and acidic residues; the sequence is AVVKIEEKKESS. A compositionally biased stretch (low complexity) spans 164-182; that stretch reads SDSSSESSSSESESESSSS. The segment covering 191-201 has biased composition (basic and acidic residues); that stretch reads VEKTEEKKEGS. Positions 202-218 are enriched in low complexity; it reads SESSSDSESSSDSSSES. The span at 219–233 shows a compositional bias: acidic residues; it reads GDSDSSSDSESESSS. Positions 234 to 250 are enriched in basic and acidic residues; that stretch reads EDEKKRKAEPASEERPA. RRM domains follow at residues 263 to 341 and 366 to 443; these read CTVF…LSNP and DTVF…FSTP. Residues 441–500 form a disordered region; that stretch reads STPRTGGGSRGGRGGFGGRGGFGGRGGFGGGRGRGRGGARSGNPNRGSVAPFSGNKVTFD. Over residues 445-480 the composition is skewed to gly residues; it reads TGGGSRGGRGGFGGRGGFGGRGGFGGGRGRGRGGAR.

Belongs to the RRM GAR family.

It localises to the nucleus. It is found in the nucleolus. In terms of biological role, helps the assembly of pre-ribosomal particles containing 18S rRNA. This Schizosaccharomyces pombe (strain 972 / ATCC 24843) (Fission yeast) protein is Protein gar2 (gar2).